The chain runs to 423 residues: Glutaminase (423 aa).

Positions 27–312 (GEVAQYIPQL…LSEDMGLHLM (286 aa)) are glutaminase. Residues serine 69, asparagine 119, glutamate 165, asparagine 172, tyrosine 196, tyrosine 248, and valine 266 each coordinate substrate. In terms of domain architecture, STAS spans 321–423 (AVRAIEERGD…SPQVDDPEEL (103 aa)).

It belongs to the glutaminase family. As to quaternary structure, homotetramer.

It carries out the reaction L-glutamine + H2O = L-glutamate + NH4(+). The chain is Glutaminase (glsA) from Corynebacterium efficiens (strain DSM 44549 / YS-314 / AJ 12310 / JCM 11189 / NBRC 100395).